Reading from the N-terminus, the 625-residue chain is Glutamine--fructose-6-phosphate aminotransferase [isomerizing] (625 aa).

The Nucleophile; for GATase activity role is filled by Cys2. The 228-residue stretch at 2–229 (CGIVGFVGRT…NDQIVTITAD (228 aa)) folds into the Glutamine amidotransferase type-2 domain. SIS domains are found at residues 296-436 (IDES…LRGN) and 470-615 (LAQD…VDQP). Catalysis depends on Lys620, which acts as the For Fru-6P isomerization activity.

Homodimer.

It localises to the cytoplasm. It carries out the reaction D-fructose 6-phosphate + L-glutamine = D-glucosamine 6-phosphate + L-glutamate. In terms of biological role, catalyzes the first step in hexosamine metabolism, converting fructose-6P into glucosamine-6P using glutamine as a nitrogen source. This is Glutamine--fructose-6-phosphate aminotransferase [isomerizing] from Corynebacterium diphtheriae (strain ATCC 700971 / NCTC 13129 / Biotype gravis).